The sequence spans 373 residues: Cell surface Cu-only superoxide dismutase ARB_03674 (373 aa).

A signal peptide spans 1 to 55 (MIWKQPPRRMGEMGGSLSRRFGNAAASWAVWRVSRSCFSLLFFFYFFLFFSSSSL). Residues Asn-75 and Asn-141 are each glycosylated (N-linked (GlcNAc...) asparagine). Positions 194, 196, and 212 each coordinate Cu cation. Residues Cys-206 and Cys-289 are joined by a disulfide bond. N-linked (GlcNAc...) asparagine glycosylation is found at Asn-254 and Asn-274. His-280 contacts Cu cation. 2 N-linked (GlcNAc...) asparagine glycosylation sites follow: Asn-283 and Asn-291. Residues 329-348 (GHAPTISATYTPTPTPSPPA) are disordered. The segment covering 331 to 340 (APTISATYTP) has biased composition (low complexity). Gly-352 is lipidated: GPI-anchor amidated glycine. The propeptide at 353-373 (AGRLVGFSLGAIMAALVPLAL) is removed in mature form.

It belongs to the Cu-Zn superoxide dismutase family. In terms of assembly, monomer. Cu cation serves as cofactor. Post-translationally, the GPI-anchor is attached to the protein in the endoplasmic reticulum and serves to target the protein to the cell surface. There, the glucosamine-inositol phospholipid moiety is cleaved off and the GPI-modified mannoprotein is covalently attached via its lipidless GPI glycan remnant to the 1,6-beta-glucan of the outer cell wall layer.

The protein localises to the secreted. It localises to the cell wall. It is found in the cell membrane. The catalysed reaction is 2 superoxide + 2 H(+) = H2O2 + O2. Its function is as follows. Superoxide dismutases serve to convert damaging superoxide radicals, a key form of ROS, to less damaging hydrogen peroxide that can be converted into water by catalase action. Degrades host-derived reactive oxygen species to escape innate immune surveillance. Involved in the occurrence of miconazole-tolerant persisters in biofilms. Persisters are cells that survive high doses of an antimicrobial agent. The unusual attributes of SOD5-like fungal proteins, including the absence of zinc and an open active site that readily captures extracellular copper, make these SODs well suited to meet challenges in zinc and copper availability at the host-pathogen interface. The sequence is that of Cell surface Cu-only superoxide dismutase ARB_03674 from Arthroderma benhamiae (strain ATCC MYA-4681 / CBS 112371) (Trichophyton mentagrophytes).